A 236-amino-acid chain; its full sequence is Kinetochore protein Spc25 (236 aa).

A coiled-coil region spans residues 44-106 (KNIISAKEAI…DMEAQLLRHT (63 aa)). Residues 194–217 (EVAGASPVTPSGSERPKATSKHSN) are disordered.

It belongs to the SPC25 family. Component of the Ndc80 complex, which is composed of Ndc80, Nuf2 and Spc25.

The protein resides in the nucleus. It localises to the chromosome. The protein localises to the centromere. Its subcellular location is the kinetochore. In terms of biological role, acts as a component of the essential kinetochore-associated Ndc80 complex, which is required for chromosome segregation and spindle checkpoint activity during meiosis and mitosis. Required for kinetochore integrity and the organization of stable microtubule binding sites in the outer plate of the kinetochore. Participates in SAC signaling that responds specifically to disruptions in spindle microtubule dynamics. The NDC80 complex synergistically enhances the affinity of the SKA1 complex for microtubules and may allow the NDC80 complex to track depolymerizing microtubules. The chain is Kinetochore protein Spc25 from Drosophila persimilis (Fruit fly).